A 229-amino-acid chain; its full sequence is DNA polymerase III subunit epsilon (229 aa).

2 residues coordinate a divalent metal cation: Asp-10 and Glu-12. Positions 10, 12, 55, and 60 each coordinate substrate. His-156 (proton acceptor) is an active-site residue. Asp-161 serves as a coordination point for a divalent metal cation. Asp-161 serves as a coordination point for substrate.

DNA polymerase III contains a core (composed of alpha, epsilon and theta chains) that associates with a tau subunit. This core dimerizes to form the POLIII' complex. PolIII' associates with the gamma complex (composed of gamma, delta, delta', psi and chi chains) and with the beta chain to form the complete DNA polymerase III complex. Requires Mg(2+) as cofactor. Mn(2+) is required as a cofactor.

The catalysed reaction is DNA(n) + a 2'-deoxyribonucleoside 5'-triphosphate = DNA(n+1) + diphosphate. In terms of biological role, DNA polymerase III is a complex, multichain enzyme responsible for most of the replicative synthesis in bacteria. The epsilon subunit contain the editing function and is a proofreading 3'-5' exonuclease. The polypeptide is DNA polymerase III subunit epsilon (dnaQ) (Rickettsia typhi (strain ATCC VR-144 / Wilmington)).